A 362-amino-acid chain; its full sequence is Peptide chain release factor 1 (362 aa).

At Q237 the chain carries N5-methylglutamine.

It belongs to the prokaryotic/mitochondrial release factor family. Methylated by PrmC. Methylation increases the termination efficiency of RF1.

Its subcellular location is the cytoplasm. In terms of biological role, peptide chain release factor 1 directs the termination of translation in response to the peptide chain termination codons UAG and UAA. The protein is Peptide chain release factor 1 of Legionella pneumophila (strain Corby).